Consider the following 288-residue polypeptide: Stage IV sporulation protein FB (288 aa).

Over 1-10 the chain is Mother cell cytoplasmic; that stretch reads MNKWLDLILK. The helical transmembrane segment at 11-30 threads the bilayer; the sequence is IHVHPFLWIIAALGLLTGHM. A topological domain (forespore intermembrane space) is located at residue Lys-31. A helical membrane pass occupies residues 32-56; sequence ALLCLLLIVLIHELGHAALAVFFSW. His-43 lines the Zn(2+) pocket. Glu-44 is a catalytic residue. Residue His-47 participates in Zn(2+) binding. Residues 57–83 lie on the Mother cell cytoplasmic side of the membrane; the sequence is RIKRVFLLPFGGTVEVEEHGNRPLKEE. Residues 84–105 form a helical membrane-spanning segment; sequence FAVIIAGPLQHIWLQFAAWMLA. Over 106-126 the chain is Forespore intermembrane space; the sequence is EVSVIHQHTFELFTFYNLSIL. Residues 127–146 traverse the membrane as a helical segment; the sequence is FVNLLPIWPLDGGKLLFLLF. Zn(2+) is bound at residue Asp-137. At 147–161 the chain is on the mother cell cytoplasmic side; that stretch reads SKQLPFQKAHRLNLK. The chain crosses the membrane as a helical span at residues 162–178; the sequence is TSLCFCLLLGCWVLFVI. Position 179 (Pro-179) is a topological domain, forespore intermembrane space. A helical membrane pass occupies residues 180-199; it reads LQISAWVLFVFLAVSLFEEY. At 200–288 the chain is on the mother cell cytoplasmic side; sequence RQRHYIHVRF…SSMEELLLPY (89 aa).

It belongs to the peptidase M50B family. In terms of assembly, forms a complex with SpoIVFA and BofA localized in the mother-cell membrane surrounding the forespore. The cofactor is Zn(2+).

It is found in the forespore outer membrane. Functionally, implicated in the coupling of mother cell to forespore gene expression. Required for spore formation. Processes the pro-sigma K factor. The sequence is that of Stage IV sporulation protein FB (spoIVFB) from Bacillus subtilis (strain 168).